Here is a 604-residue protein sequence, read N- to C-terminus: Protein hemingway (604 aa).

Disordered stretches follow at residues Met1–His70, Asn103–Gln309, Ser359–Ile387, and Thr544–Asp585. Composition is skewed to acidic residues over residues Ser8 to Pro38, Glu135 to Gln183, Asp194 to Pro214, and Glu288 to Gln300. The segment covering Glu368 to Ser379 has biased composition (low complexity).

Belongs to the CFAP97 family. In terms of tissue distribution, detected in ciliated sensory neurons at all stages of development, and in adult testis.

It localises to the cell projection. The protein resides in the cilium. The protein localises to the perikaryon. It is found in the cytoplasm. Functionally, involved in assembly and/or maintenance of motile cilia. Required during spermatogenesis for axoneme elongation. Necessary for optimal function of the chordotonal (hearing) organs. The protein is Protein hemingway of Drosophila melanogaster (Fruit fly).